The primary structure comprises 502 residues: Glycerol kinase (502 aa).

Thr-14 provides a ligand contact to ADP. ATP is bound by residues Thr-14, Thr-15, and Ser-16. Thr-14 lines the sn-glycerol 3-phosphate pocket. Arg-18 serves as a coordination point for ADP. Arg-84, Glu-85, Tyr-136, and Asp-246 together coordinate sn-glycerol 3-phosphate. Arg-84, Glu-85, Tyr-136, Asp-246, and Gln-247 together coordinate glycerol. Residues Thr-268 and Gly-311 each coordinate ADP. Thr-268, Gly-311, Gln-315, and Gly-412 together coordinate ATP. Residues Gly-412 and Asn-416 each contribute to the ADP site.

Belongs to the FGGY kinase family. Homotetramer and homodimer (in equilibrium). Heterodimer with EIIA-Glc. Binds 1 zinc ion per glycerol kinase EIIA-Glc dimer. The zinc ion is important for dimerization.

It carries out the reaction glycerol + ATP = sn-glycerol 3-phosphate + ADP + H(+). Its pathway is polyol metabolism; glycerol degradation via glycerol kinase pathway; sn-glycerol 3-phosphate from glycerol: step 1/1. Its activity is regulated as follows. Activity of this regulatory enzyme is affected by several metabolites. Allosterically and non-competitively inhibited by fructose 1,6-bisphosphate (FBP) and unphosphorylated phosphocarrier protein EIIA-Glc (III-Glc), an integral component of the bacterial phosphotransferase (PTS) system. In terms of biological role, key enzyme in the regulation of glycerol uptake and metabolism. Catalyzes the phosphorylation of glycerol to yield sn-glycerol 3-phosphate. The protein is Glycerol kinase of Salmonella heidelberg (strain SL476).